The sequence spans 206 residues: Small ribosomal subunit protein uS4 (206 aa).

The S4 RNA-binding domain occupies 96–156 (TRLDNVVYRM…EKSQKQARIK (61 aa)).

Belongs to the universal ribosomal protein uS4 family. Part of the 30S ribosomal subunit. Contacts protein S5. The interaction surface between S4 and S5 is involved in control of translational fidelity.

Its function is as follows. One of the primary rRNA binding proteins, it binds directly to 16S rRNA where it nucleates assembly of the body of the 30S subunit. With S5 and S12 plays an important role in translational accuracy. This is Small ribosomal subunit protein uS4 from Shewanella loihica (strain ATCC BAA-1088 / PV-4).